Reading from the N-terminus, the 380-residue chain is Cytochrome b (380 aa).

4 helical membrane-spanning segments follow: residues 34–54 (FGSL…LLAM), 78–99 (WLIR…YLHI), 114–134 (WNIG…GYVL), and 179–199 (FFAL…VHLT). Residues His-84 and His-98 each contribute to the heme b site. Positions 183 and 197 each coordinate heme b. His-202 is a binding site for a ubiquinone. Transmembrane regions (helical) follow at residues 227 to 247 (IKDM…ALFS), 289 to 309 (LGGV…PLLH), 321 to 341 (LLPF…WVGS), and 348 to 368 (FIII…VLFP).

Belongs to the cytochrome b family. The cytochrome bc1 complex contains 11 subunits: 3 respiratory subunits (MT-CYB, CYC1 and UQCRFS1), 2 core proteins (UQCRC1 and UQCRC2) and 6 low-molecular weight proteins (UQCRH/QCR6, UQCRB/QCR7, UQCRQ/QCR8, UQCR10/QCR9, UQCR11/QCR10 and a cleavage product of UQCRFS1). This cytochrome bc1 complex then forms a dimer. Requires heme b as cofactor.

It is found in the mitochondrion inner membrane. Its function is as follows. Component of the ubiquinol-cytochrome c reductase complex (complex III or cytochrome b-c1 complex) that is part of the mitochondrial respiratory chain. The b-c1 complex mediates electron transfer from ubiquinol to cytochrome c. Contributes to the generation of a proton gradient across the mitochondrial membrane that is then used for ATP synthesis. This chain is Cytochrome b (MT-CYB), found in Gymnorhina tibicen (Australian magpie).